We begin with the raw amino-acid sequence, 397 residues long: Transcription factor TGAL6 (397 aa).

In terms of domain architecture, bZIP spans 104-148; it reads PDKVLRRLAQNREAARKSRLRKKAYIQQLETSRLKLAQLEQELQR. The basic motif stretch occupies residues 106-126; that stretch reads KVLRRLAQNREAARKSRLRKK. A leucine-zipper region spans residues 132-146; sequence LETSRLKLAQLEQEL. The region spanning 175–390 is the DOG1 domain; the sequence is ALGFEIKYSH…RALSSLWAAR (216 aa).

It belongs to the bZIP family.

The protein localises to the nucleus. Functionally, transcriptional regulator involved in defense response. This chain is Transcription factor TGAL6, found in Oryza sativa subsp. japonica (Rice).